Here is a 311-residue protein sequence, read N- to C-terminus: tRNA pseudouridine synthase B (311 aa).

The Nucleophile role is filled by D49.

The protein belongs to the pseudouridine synthase TruB family. Type 1 subfamily.

It carries out the reaction uridine(55) in tRNA = pseudouridine(55) in tRNA. Its function is as follows. Responsible for synthesis of pseudouridine from uracil-55 in the psi GC loop of transfer RNAs. In Actinobacillus succinogenes (strain ATCC 55618 / DSM 22257 / CCUG 43843 / 130Z), this protein is tRNA pseudouridine synthase B.